A 149-amino-acid polypeptide reads, in one-letter code: Urease accessory protein UreE (149 aa).

Belongs to the UreE family.

It is found in the cytoplasm. Involved in urease metallocenter assembly. Binds nickel. Probably functions as a nickel donor during metallocenter assembly. The polypeptide is Urease accessory protein UreE (Prochlorococcus marinus (strain MIT 9215)).